The following is a 113-amino-acid chain: Class I hydrophobin 1 (113 aa).

An N-terminal signal peptide occupies residues 1 to 17 (MQFKFLSTVALATLAVA). Cystine bridges form between Cys32–Cys92, Cys39–Cys86, Cys40–Cys73, and Cys93–Cys106.

The protein belongs to the fungal hydrophobin family. In terms of assembly, self-assembles to form functional amyloid fibrils called rodlets. Self-assembly into fibrillar rodlets occurs spontaneously at hydrophobic:hydrophilic interfaces and the rodlets further associate laterally to form amphipathic monolayers.

The protein resides in the secreted. The protein localises to the cell wall. Functionally, aerial growth, conidiation, and dispersal of filamentous fungi in the environment rely upon a capability of their secreting small amphipathic proteins called hydrophobins (HPBs) with low sequence identity. Class I can self-assemble into an outermost layer of rodlet bundles on aerial cell surfaces, conferring cellular hydrophobicity that supports fungal growth, development and dispersal; whereas Class II form highly ordered films at water-air interfaces through intermolecular interactions but contribute nothing to the rodlet structure. CoH1 is an asexual monokaryon-specific class I hydrophobin that is involved in aerial growth of mycelia. In Coprinopsis cinerea (Inky cap fungus), this protein is Class I hydrophobin 1.